The primary structure comprises 30 residues: V-type proton ATPase catalytic subunit A isoform 2 (30 aa).

Belongs to the ATPase alpha/beta chains family. As to quaternary structure, V-ATPase is a heteromultimeric enzyme composed of a peripheral catalytic V1 complex (main components: subunits A, B, C, D, E, and F) attached to an integral membrane V0 proton pore complex (main component: the proteolipid protein).

It catalyses the reaction ATP + H2O + 4 H(+)(in) = ADP + phosphate + 5 H(+)(out). In terms of biological role, catalytic subunit of the peripheral V1 complex of vacuolar ATPase. V-ATPase vacuolar ATPase is responsible for acidifying a variety of intracellular compartments in eukaryotic cells. In Equisetum arvense (Field horsetail), this protein is V-type proton ATPase catalytic subunit A isoform 2.